A 333-amino-acid polypeptide reads, in one-letter code: Olfactory receptor 9S13 (333 aa).

Residues 1 to 35 are Extracellular-facing; the sequence is MATAVHRNGSLTPVSLRVFVLVGFGGGALTQALLF. An N-linked (GlcNAc...) asparagine glycan is attached at N8. A helical transmembrane segment spans residues 36 to 56; that stretch reads AVFLVLYVVTVLGNLTMIVVI. The Cytoplasmic portion of the chain corresponds to 57–72; it reads TLDARLHSPMYFFLKN. A helical membrane pass occupies residues 73–93; the sequence is LSFVDLCYSSAIAPNALANFL. The Extracellular portion of the chain corresponds to 94–106; it reads STSKVISFEACAT. A disulfide bridge links C104 with C196. Residues 107–127 form a helical membrane-spanning segment; the sequence is QFFFFSLLATTETFLLAVMAY. Topologically, residues 128–150 are cytoplasmic; sequence DRFMAICSPLRYPVTMCPTTCTR. The chain crosses the membrane as a helical span at residues 151–171; sequence LVLGTFCVGCLNSIVQTSLTF. Over 172–203 the chain is Extracellular; sequence QLPFCSSNRIDHFYCDVPPLLQLACASTALNE. The chain crosses the membrane as a helical span at residues 204–224; it reads LFLFGLCGFIIVSTTLAVLVS. The Cytoplasmic portion of the chain corresponds to 225-251; that stretch reads YGYITVTILRMHSGSGRHKVFSTCGSH. A helical membrane pass occupies residues 252–272; that stretch reads LTAVSLFYGTLFVMYAQPGAL. Topologically, residues 273–278 are extracellular; that stretch reads TSMEQG. A helical membrane pass occupies residues 279-299; the sequence is KVVSIFYTLVIPMLNPLIYSL. Topologically, residues 300-333 are cytoplasmic; it reads RNKDVKDALQRLGQRHSLVKAVRGCPAAGGNASV.

The protein belongs to the G-protein coupled receptor 1 family.

Its subcellular location is the cell membrane. Functionally, odorant receptor. This chain is Olfactory receptor 9S13, found in Mus musculus (Mouse).